Reading from the N-terminus, the 583-residue chain is MANFKVSRVETTPFEGQKPGTSGLRKKVKVFIQPHYLQNFVQATFNALGADRVEGATLVVSGDGRYYSKDAIQIITKMAAANGVRRVWIGQNGLLSTPAVSAVVRERVGADGSKATGAFILTASHNPGGPHEDFGIKYNMENGGPAPEGITNKIYENTTTIKEYLIAEGLPDVDISTTGVSSFEGPKGKFDVDVFDSTSDYLKLLKSIFDFPAIQKLLSSPKFSFCYDALHGVAGVHAKRIFVEELGANESSLVNCVPKEDFGGGHPDPNLTYAKELVARMGLSKTHSEPNPPEFGAAADGDGDRNMVLGKRFFVTPSDSVAIIAANAVQAIPYFSGGLKGVARSMPTSAALDIVAKHLNLKFFEVPTGWKFFGNLMDAGMCSICGEESFGTGSDHIREKDGIWAVLAWLSILAYKNKDNLGEGNLVSVEDIVRQHWAIYGRHYYTRYDYENVNADGAKDLMAHLVKLQSSIDEVNKLIKGIRSDVSNVVHADEFEYKDPVDGSVSKHQGIRYLFEDGSRLVFRLSGTGSEGATIRLYIEQYEKDSSKIGRDSQEALAPLVEVALKLSKMQEYTSRSAPTVIT.

A disordered region spans residues 1 to 20 (MANFKVSRVETTPFEGQKPG). Alpha-D-glucose 1,6-bisphosphate is bound by residues R25 and S124. The Phosphoserine intermediate role is filled by S124. The Mg(2+) site is built by S124, D300, D302, and D304. Residue S124 is modified to Phosphoserine. Positions 304, 305, 368, 387, 389, and 400 each coordinate alpha-D-glucose 1,6-bisphosphate.

The protein belongs to the phosphohexose mutase family. As to quaternary structure, monomer. It depends on Mg(2+) as a cofactor.

The protein localises to the cytoplasm. The enzyme catalyses alpha-D-glucose 1-phosphate = alpha-D-glucose 6-phosphate. It carries out the reaction O-phospho-L-seryl-[protein] + alpha-D-glucose 1-phosphate = alpha-D-glucose 1,6-bisphosphate + L-seryl-[protein]. The catalysed reaction is alpha-D-glucose 1,6-bisphosphate + L-seryl-[protein] = O-phospho-L-seryl-[protein] + alpha-D-glucose 6-phosphate. Catalyzes the reversible isomerization of alpha-D-glucose 1-phosphate to alpha-D-glucose 6-phosphate. The mechanism proceeds via the intermediate compound alpha-D-glucose 1,6-bisphosphate. This enzyme participates in both the breakdown and synthesis of glucose. The chain is Phosphoglucomutase, cytoplasmic (PGM1) from Solanum tuberosum (Potato).